Reading from the N-terminus, the 292-residue chain is ATP synthase subunit a (292 aa).

The next 6 membrane-spanning stretches (helical) occupy residues 37–57 (IDSV…FWLC), 96–116 (FIAP…AMDM), 144–164 (VVPT…LVLC), 192–212 (PVFA…EYVA), 230–250 (LVFM…SGVL), and 263–283 (AIFH…LALI).

This sequence belongs to the ATPase A chain family. In terms of assembly, F-type ATPases have 2 components, CF(1) - the catalytic core - and CF(0) - the membrane proton channel. CF(1) has five subunits: alpha(3), beta(3), gamma(1), delta(1), epsilon(1). CF(0) has three main subunits: a(1), b(2) and c(9-12). The alpha and beta chains form an alternating ring which encloses part of the gamma chain. CF(1) is attached to CF(0) by a central stalk formed by the gamma and epsilon chains, while a peripheral stalk is formed by the delta and b chains.

The protein localises to the cell inner membrane. Functionally, key component of the proton channel; it plays a direct role in the translocation of protons across the membrane. The protein is ATP synthase subunit a of Paracidovorax citrulli (strain AAC00-1) (Acidovorax citrulli).